We begin with the raw amino-acid sequence, 476 residues long: Aspartyl/glutamyl-tRNA(Asn/Gln) amidotransferase subunit B (476 aa).

Belongs to the GatB/GatE family. GatB subfamily. As to quaternary structure, heterotrimer of A, B and C subunits.

The enzyme catalyses L-glutamyl-tRNA(Gln) + L-glutamine + ATP + H2O = L-glutaminyl-tRNA(Gln) + L-glutamate + ADP + phosphate + H(+). It carries out the reaction L-aspartyl-tRNA(Asn) + L-glutamine + ATP + H2O = L-asparaginyl-tRNA(Asn) + L-glutamate + ADP + phosphate + 2 H(+). Functionally, allows the formation of correctly charged Asn-tRNA(Asn) or Gln-tRNA(Gln) through the transamidation of misacylated Asp-tRNA(Asn) or Glu-tRNA(Gln) in organisms which lack either or both of asparaginyl-tRNA or glutaminyl-tRNA synthetases. The reaction takes place in the presence of glutamine and ATP through an activated phospho-Asp-tRNA(Asn) or phospho-Glu-tRNA(Gln). The polypeptide is Aspartyl/glutamyl-tRNA(Asn/Gln) amidotransferase subunit B (Lactobacillus johnsonii (strain CNCM I-12250 / La1 / NCC 533)).